Consider the following 254-residue polypeptide: Phosphoribosylaminoimidazole-succinocarboxamide synthase (254 aa).

It belongs to the SAICAR synthetase family.

The catalysed reaction is 5-amino-1-(5-phospho-D-ribosyl)imidazole-4-carboxylate + L-aspartate + ATP = (2S)-2-[5-amino-1-(5-phospho-beta-D-ribosyl)imidazole-4-carboxamido]succinate + ADP + phosphate + 2 H(+). Its pathway is purine metabolism; IMP biosynthesis via de novo pathway; 5-amino-1-(5-phospho-D-ribosyl)imidazole-4-carboxamide from 5-amino-1-(5-phospho-D-ribosyl)imidazole-4-carboxylate: step 1/2. The polypeptide is Phosphoribosylaminoimidazole-succinocarboxamide synthase (Bartonella tribocorum (strain CIP 105476 / IBS 506)).